Reading from the N-terminus, the 301-residue chain is TLR adapter interacting with SLC15A4 on the lysosome (301 aa).

Positions 290–294 match the pLxIS motif motif; that stretch reads SLHIS. Phosphoserine is present on serine 294.

As to quaternary structure, interacts (via pLxIS motif) with IRF5; leading to IRF5 activation. Interacts with SLC15A4; leading to its recruitment to endolysosome. Post-translationally, the phosphorylated pLxIS motif constitutes an IRF5-binding motif, leading to recruitment of the transcription factor IRF5 to induce type-I interferons and other cytokines. In terms of tissue distribution, highly expressed in immune cell types such as B-cells, neutrophils, dendritic cells and monocytes, the expression levels are two-three-fold higher in female cells compared to male cells (at protein level). Expressed at low levels in T-cells and NK cells.

The protein localises to the lysosome membrane. It is found in the endosome membrane. Its subcellular location is the nucleus. It localises to the cytoplasm. Innate immune adapter that mediates the recruitment and activation of IRF5 downstream of endolysosomal toll-like receptors TLR7, TLR8 and TLR9. Following recruitment to endolysosome by SLC15A4 downstream of TLR7, TLR8 and TLR9, specifically recruits IRF5 transcription factor via its pLxIS motif, leading to IRF5 activation and subsequent expression of type I interferons. Plays a role in the regulation of endolysosomal pH in immune cells such as B-cells, dendritic cells and monocytes. The sequence is that of TLR adapter interacting with SLC15A4 on the lysosome from Homo sapiens (Human).